The sequence spans 388 residues: GTPase Obg (388 aa).

The Obg domain maps to 1–159 (MKFIDEASIR…RSLRLELLLL (159 aa)). Positions 160 to 333 (ADVGLLGMPN…LSLKLLDYIA (174 aa)) constitute an OBG-type G domain. Residues 166-173 (GMPNAGKS), 191-195 (FTTLV), 213-216 (DIPG), 283-286 (NKTD), and 314-316 (SAF) each bind GTP. Mg(2+) is bound by residues S173 and T193.

Belongs to the TRAFAC class OBG-HflX-like GTPase superfamily. OBG GTPase family. Monomer. It depends on Mg(2+) as a cofactor.

The protein localises to the cytoplasm. Functionally, an essential GTPase which binds GTP, GDP and possibly (p)ppGpp with moderate affinity, with high nucleotide exchange rates and a fairly low GTP hydrolysis rate. Plays a role in control of the cell cycle, stress response, ribosome biogenesis and in those bacteria that undergo differentiation, in morphogenesis control. This is GTPase Obg from Shewanella denitrificans (strain OS217 / ATCC BAA-1090 / DSM 15013).